The following is a 633-amino-acid chain: Phosphomethylpyrimidine synthase (633 aa).

Positions 1–13 are enriched in polar residues; sequence MNIRSNPDTTLPA. Positions 1–20 are disordered; that stretch reads MNIRSNPDTTLPAVTTGPLP. Residues N221, M250, Y279, H315, 335 to 337, 376 to 379, and E415 contribute to the substrate site; these read SRG and DGLR. Residue H419 coordinates Zn(2+). Y442 lines the substrate pocket. H483 is a Zn(2+) binding site. Positions 563, 566, and 571 each coordinate [4Fe-4S] cluster.

The protein belongs to the ThiC family. In terms of assembly, homodimer. The cofactor is [4Fe-4S] cluster.

It catalyses the reaction 5-amino-1-(5-phospho-beta-D-ribosyl)imidazole + S-adenosyl-L-methionine = 4-amino-2-methyl-5-(phosphooxymethyl)pyrimidine + CO + 5'-deoxyadenosine + formate + L-methionine + 3 H(+). It participates in cofactor biosynthesis; thiamine diphosphate biosynthesis. Catalyzes the synthesis of the hydroxymethylpyrimidine phosphate (HMP-P) moiety of thiamine from aminoimidazole ribotide (AIR) in a radical S-adenosyl-L-methionine (SAM)-dependent reaction. The sequence is that of Phosphomethylpyrimidine synthase from Bradyrhizobium sp. (strain ORS 278).